Reading from the N-terminus, the 79-residue chain is U-actitoxin-Avd9d (79 aa).

Positions 1–19 (NLKVLAVFVLCAILVVVTA) are cleaved as a signal peptide. Positions 20–37 (ERRGTETGGYKKDTLEDL) are excised as a propeptide. A ShKT domain is found at 44-79 (CFDSFKEATCHMAKTNRLCKTSAKYQINCKKTCGLC). 3 cysteine pairs are disulfide-bonded: Cys-44/Cys-79, Cys-53/Cys-72, and Cys-62/Cys-76. The tract at residues 67 to 68 (KY) is crucial for binding to potassium channels.

Belongs to the sea anemone type 1 potassium channel toxin family. Type 1b subfamily.

Its subcellular location is the secreted. It is found in the nematocyst. Inhibits voltage-gated potassium channels (Kv1/KCNA). The polypeptide is U-actitoxin-Avd9d (Anemonia viridis (Snakelocks anemone)).